Consider the following 238-residue polypeptide: Probable transcriptional regulatory protein SMU_1789c (238 aa).

The protein belongs to the TACO1 family. YeeN subfamily.

The protein localises to the cytoplasm. The polypeptide is Probable transcriptional regulatory protein SMU_1789c (Streptococcus mutans serotype c (strain ATCC 700610 / UA159)).